We begin with the raw amino-acid sequence, 352 residues long: UDP-N-acetylglucosamine--N-acetylmuramyl-(pentapeptide) pyrophosphoryl-undecaprenol N-acetylglucosamine transferase (352 aa).

UDP-N-acetyl-alpha-D-glucosamine is bound by residues 12–14 (TGG), Asn124, Arg160, Ser188, and Gln287.

Belongs to the glycosyltransferase 28 family. MurG subfamily.

It localises to the cell inner membrane. The enzyme catalyses di-trans,octa-cis-undecaprenyl diphospho-N-acetyl-alpha-D-muramoyl-L-alanyl-D-glutamyl-meso-2,6-diaminopimeloyl-D-alanyl-D-alanine + UDP-N-acetyl-alpha-D-glucosamine = di-trans,octa-cis-undecaprenyl diphospho-[N-acetyl-alpha-D-glucosaminyl-(1-&gt;4)]-N-acetyl-alpha-D-muramoyl-L-alanyl-D-glutamyl-meso-2,6-diaminopimeloyl-D-alanyl-D-alanine + UDP + H(+). It functions in the pathway cell wall biogenesis; peptidoglycan biosynthesis. Functionally, cell wall formation. Catalyzes the transfer of a GlcNAc subunit on undecaprenyl-pyrophosphoryl-MurNAc-pentapeptide (lipid intermediate I) to form undecaprenyl-pyrophosphoryl-MurNAc-(pentapeptide)GlcNAc (lipid intermediate II). The sequence is that of UDP-N-acetylglucosamine--N-acetylmuramyl-(pentapeptide) pyrophosphoryl-undecaprenol N-acetylglucosamine transferase from Dechloromonas aromatica (strain RCB).